The primary structure comprises 775 residues: Ankyrin repeat and EF-hand domain-containing protein 1 (775 aa).

ANK repeat units lie at residues 47–76, 184–213, 217–246, 250–279, 524–553, 557–586, 590–619, and 623–652; these read DGLSALHLASISNDTDMVSFLLKLGAHPDV, TGRTALMESSREGVLEIVRGILERGGEVNA, DRHHAAHFAAKGGFFDILKLLFAYNGDMGL, DGNTPLHFAAMGGFADCCKYIAQRGCDLKW, TYKTPLMIACASGNIDVVKFLIEKGANVNA, FLWTPLHFACHAGQQDIVELLVKAGASIDA, NNSTPLSRAIESCRLDTVKYLLDMGAKFQI, and KGHAAMDIAKAYADYRIIDMIKEKLDNLPK.

This chain is Ankyrin repeat and EF-hand domain-containing protein 1 (Ankef1), found in Mus musculus (Mouse).